The sequence spans 724 residues: MEDREMSTKPESISSRPPEIPDNDWKISLYDPGDNDDCPRACFLPCDMFAHTRYRLDLIKQGRDPLDLTDYKDFNPTCWKFFGLCTGGFCIGSGIYTGRETTRIRQKYGIKGTAGDDMTRGIFCQPCSLIRNDLEIRQREGMKQEADLPPPRPLGEDYQPIFAIKPDGYKSEPRMTTPRGILKPIASPEISSPPDGQPALREVHFHEPGQGNAPNVAASYPAEGGHVSQSSFSPRTEGGPSTVNQRRSREGTLTPIEEADNQAGEERNKSTTLGPAMNTFQRTTSPPVMHVTTSDAPIQAPTPTRDHDRYGNGRGPDTDRLEVPVQSNTPARKSRFSEEFDAPSADEMFSKIPDAAPSSTLDAPPRLPQLPGAFDTPAMPPATVPAGSSDVPSQLPQLPGAFPSSSHSETPNMKPSALGQLTALRDVANQSPKVVTVEEAETSIAETIQDEADEAQVGDRPHDNSQDPQLDTLPPRDTRHRLNIDEQLAFLPPQAEAHDSGTNTVVPLPDQPEAHGPHMDAKVALAAARIKDHPIESDPRINSPKPISIRNHEFTEDKRLAVPRSDSPFKPGIHLDQRVPTPPALVRPHNRLEDRQTATPSPSADRENRNLAADVRTASPGLGSRRGGLMGGRPHSLRHDSRVGTPKHLENVHDLAADVRAPTGPVTPLAKSPEPRSPPPKRLAAASPALSASSISIGTRAHQLLEHFLEGNRKAAERENGNKS.

Disordered stretches follow at residues 1–23 (MEDR…IPDN), 166–477 (PDGY…PPRD), 496–517 (EAHD…AHGP), and 532–691 (DHPI…PALS). Polar residues-rich tracts occupy residues 227–245 (VSQS…TVNQ) and 270–296 (STTL…TSDA). A compositionally biased stretch (basic and acidic residues) spans 304-322 (TRDHDRYGNGRGPDTDRLE). Residues 403–413 (PSSSHSETPNM) are compositionally biased toward polar residues. Basic and acidic residues-rich tracts occupy residues 550–560 (RNHEFTEDKRL) and 637–657 (LRHD…DLAA). Residues 682-691 (RLAAASPALS) are compositionally biased toward low complexity.

This is an uncharacterized protein from Neurospora crassa (strain ATCC 24698 / 74-OR23-1A / CBS 708.71 / DSM 1257 / FGSC 987).